Consider the following 238-residue polypeptide: Monocyte to macrophage differentiation factor (238 aa).

The Cytoplasmic segment spans residues M1–H28. A helical membrane pass occupies residues A29–L49. Over H50 to T61 the chain is Lumenal. The helical transmembrane segment at A62–V82 threads the bilayer. Topologically, residues S83–R101 are cytoplasmic. A helical membrane pass occupies residues M102–G122. The Lumenal segment spans residues P123–L124. A helical membrane pass occupies residues A125–L145. The Cytoplasmic segment spans residues Y146–K151. The chain crosses the membrane as a helical span at residues V152–M172. Over N173 to N174 the chain is Lumenal. The chain crosses the membrane as a helical span at residues T175–F195. Topologically, residues K196 to D198 are cytoplasmic. Residues G199–H219 traverse the membrane as a helical segment. Residues Y220–L238 lie on the Lumenal side of the membrane.

Belongs to the ADIPOR family. Exhibits relatively ubiquitous expression with preferential expression in mature (in vitro differentiated) macrophages.

The protein localises to the late endosome membrane. Its subcellular location is the lysosome membrane. Its function is as follows. Involved in the dynamics of lysosomal membranes associated with microglial activation following brain lesion. The protein is Monocyte to macrophage differentiation factor of Homo sapiens (Human).